A 1051-amino-acid polypeptide reads, in one-letter code: Putative helicase/primase complex protein (1051 aa).

It belongs to the asfivirus F1055L family.

Functionally, may be involved in DNA replication. The protein is Putative helicase/primase complex protein of Ornithodoros (relapsing fever ticks).